The following is a 36-amino-acid chain: Photosystem I reaction center subunit VIII (36 aa).

Residues 6 to 26 form a helical membrane-spanning segment; it reads LPSIFVPLVGLVFPAIAMASL.

The protein belongs to the PsaI family.

The protein resides in the plastid. It localises to the chloroplast thylakoid membrane. In terms of biological role, may help in the organization of the PsaL subunit. This chain is Photosystem I reaction center subunit VIII, found in Drimys granadensis.